Consider the following 412-residue polypeptide: 4-hydroxyphenylpyruvate dioxygenase (412 aa).

VOC domains are found at residues 31-179 (GYDH…LISR) and 209-369 (RIDH…LFTK). Fe cation-binding residues include histidine 212, histidine 295, and glutamate 380.

The protein belongs to the 4HPPD family. Fe cation serves as cofactor.

The enzyme catalyses 3-(4-hydroxyphenyl)pyruvate + O2 = homogentisate + CO2. Its pathway is amino-acid degradation; L-phenylalanine degradation; acetoacetate and fumarate from L-phenylalanine: step 3/6. This Neurospora crassa (strain ATCC 24698 / 74-OR23-1A / CBS 708.71 / DSM 1257 / FGSC 987) protein is 4-hydroxyphenylpyruvate dioxygenase.